The primary structure comprises 324 residues: 4-hydroxyphenylpyruvate 3-dimethylallyltransferase (324 aa).

2 residues coordinate substrate: arginine 160 and glutamate 281.

The protein belongs to the aromatic prenyltransferase family. In terms of assembly, monomer.

The catalysed reaction is 3-(4-hydroxyphenyl)pyruvate + dimethylallyl diphosphate = 3-dimethylallyl-4-hydroxyphenylpyruvate + diphosphate. Its pathway is antibiotic biosynthesis. Functionally, magnesium-independent aromatic prenyltransferase that catalyzes the irreversible transfer of a dimethylallyl group to 4-hydroxyphenylpyruvate to produce the ring A structure in the clorobiocin biosynthesis pathway. Clorobiocin is an aminocoumarin family antibiotic. The protein is 4-hydroxyphenylpyruvate 3-dimethylallyltransferase of Streptomyces roseochromogenus subsp. oscitans.